The chain runs to 285 residues: Pantothenate synthetase (285 aa).

Residue 30-37 (MGNLHRGH) coordinates ATP. The active-site Proton donor is His37. A (R)-pantoate-binding site is contributed by Gln61. Beta-alanine is bound at residue Gln61. 149-152 (GRKD) provides a ligand contact to ATP. Residue Gln155 participates in (R)-pantoate binding. ATP contacts are provided by residues Val178 and 186–189 (LSSR).

It belongs to the pantothenate synthetase family. Homodimer.

The protein localises to the cytoplasm. It carries out the reaction (R)-pantoate + beta-alanine + ATP = (R)-pantothenate + AMP + diphosphate + H(+). It participates in cofactor biosynthesis; (R)-pantothenate biosynthesis; (R)-pantothenate from (R)-pantoate and beta-alanine: step 1/1. Catalyzes the condensation of pantoate with beta-alanine in an ATP-dependent reaction via a pantoyl-adenylate intermediate. This is Pantothenate synthetase from Halorhodospira halophila (strain DSM 244 / SL1) (Ectothiorhodospira halophila (strain DSM 244 / SL1)).